We begin with the raw amino-acid sequence, 173 residues long: Dirigent protein 8 (173 aa).

The first 22 residues, 1–22 (MTNLILIFAAQILLFYAVASVG), serve as a signal peptide directing secretion. N-linked (GlcNAc...) asparagine glycans are attached at residues asparagine 69, asparagine 90, and asparagine 125.

The protein belongs to the plant dirigent protein family. As to quaternary structure, homodimer.

It localises to the secreted. The protein localises to the extracellular space. Its subcellular location is the apoplast. In terms of biological role, dirigent proteins impart stereoselectivity on the phenoxy radical-coupling reaction, yielding optically active lignans from two molecules of coniferyl alcohol in the biosynthesis of lignans, flavonolignans, and alkaloids and thus plays a central role in plant secondary metabolism. The sequence is that of Dirigent protein 8 (DIR8) from Arabidopsis thaliana (Mouse-ear cress).